Here is a 148-residue protein sequence, read N- to C-terminus: SsrA-binding protein (148 aa).

Residues 119-148 (AKGKKQHDKRETEKKRDWEREKARLMRSPG) form a disordered region. Positions 126-142 (DKRETEKKRDWEREKAR) are enriched in basic and acidic residues.

It belongs to the SmpB family.

It localises to the cytoplasm. In terms of biological role, required for rescue of stalled ribosomes mediated by trans-translation. Binds to transfer-messenger RNA (tmRNA), required for stable association of tmRNA with ribosomes. tmRNA and SmpB together mimic tRNA shape, replacing the anticodon stem-loop with SmpB. tmRNA is encoded by the ssrA gene; the 2 termini fold to resemble tRNA(Ala) and it encodes a 'tag peptide', a short internal open reading frame. During trans-translation Ala-aminoacylated tmRNA acts like a tRNA, entering the A-site of stalled ribosomes, displacing the stalled mRNA. The ribosome then switches to translate the ORF on the tmRNA; the nascent peptide is terminated with the 'tag peptide' encoded by the tmRNA and targeted for degradation. The ribosome is freed to recommence translation, which seems to be the essential function of trans-translation. This chain is SsrA-binding protein, found in Paraburkholderia xenovorans (strain LB400).